A 227-amino-acid polypeptide reads, in one-letter code: UPF0173 metal-dependent hydrolase BCB4264_A4722 (227 aa).

Belongs to the UPF0173 family.

The polypeptide is UPF0173 metal-dependent hydrolase BCB4264_A4722 (Bacillus cereus (strain B4264)).